The chain runs to 285 residues: Nucleotide-binding protein PSPTO_4456 (285 aa).

An ATP-binding site is contributed by 8-15; the sequence is GRSGSGKS. A GTP-binding site is contributed by 60 to 63; that stretch reads DARN.

It belongs to the RapZ-like family.

Displays ATPase and GTPase activities. The chain is Nucleotide-binding protein PSPTO_4456 from Pseudomonas syringae pv. tomato (strain ATCC BAA-871 / DC3000).